A 496-amino-acid chain; its full sequence is Lysine--tRNA ligase (496 aa).

Residues glutamate 408 and glutamate 415 each coordinate Mg(2+).

It belongs to the class-II aminoacyl-tRNA synthetase family. In terms of assembly, homodimer. Mg(2+) is required as a cofactor.

The protein resides in the cytoplasm. The catalysed reaction is tRNA(Lys) + L-lysine + ATP = L-lysyl-tRNA(Lys) + AMP + diphosphate. The polypeptide is Lysine--tRNA ligase (Legionella pneumophila (strain Corby)).